A 435-amino-acid chain; its full sequence is CBL-interacting protein kinase 28 (435 aa).

Residues 11 to 265 (YVIGRQLGQG…ISRIKRSAWY (255 aa)) form the Protein kinase domain. Residues 17-25 (LGQGTFGKV) and Lys40 each bind ATP. The Proton acceptor role is filled by Asp133. The segment at 151 to 180 (DFGLSALAESRRQDGLLHTACGTPAYVAPE) is activation loop. An NAF domain is found at 283–329 (CTSEAPFSGPTICISSERNQEPPNLHNLNAFDIISLSTGFDLSGLFG). The PPI stretch occupies residues 334–363 (RRESLFTSRKPAAAVLVKLKELAKALNLKV).

It belongs to the protein kinase superfamily. CAMK Ser/Thr protein kinase family. SNF1 subfamily. Mn(2+) serves as cofactor.

The catalysed reaction is L-seryl-[protein] + ATP = O-phospho-L-seryl-[protein] + ADP + H(+). It carries out the reaction L-threonyl-[protein] + ATP = O-phospho-L-threonyl-[protein] + ADP + H(+). CIPK serine-threonine protein kinases interact with CBL proteins. Binding of a CBL protein to the regulatory NAF domain of CIPK protein lead to the activation of the kinase in a calcium-dependent manner. This Oryza sativa subsp. japonica (Rice) protein is CBL-interacting protein kinase 28 (CIPK28).